The primary structure comprises 138 residues: Salivary protein 15 Iper-3 (138 aa).

A signal peptide spans 1–21; the sequence is MESFVAMKVVCITVLFVIVAV. Residues Asn30, Asn42, Asn68, Asn107, and Asn127 are each glycosylated (N-linked (GlcNAc...) asparagine). The segment at 119 to 138 is CD4-binding; it reads GPNGQKCANKSQCVGHIPGC.

The protein belongs to the salp15 family. In terms of assembly, interacts with host CD4. Interacts with host DC-SIGN (CD209). Interacts with Borrelia outer surface protein C (OspC). Expressed in salivary glands.

It localises to the secreted. Its function is as follows. Salivary tick protein that downregulates host immune system by binding to both dendritic cells, and CD4(+) T cells. Specifically binds to the CD4 coreceptor on T cells. This interaction prevents the activation of the Src kinase, Lck, and its downstream substrate Zap-70, and results in deficient activation of PLCgamma1, the repression of calcium fluxes triggered by T-cell antigen receptor (TCR) ligation, and a subsequent reduction in interleukin-2 production. This salivary protein also binds to DC-SIGN (CD209) on dendritic cells (DC) and activates the Raf-1 kinase/MEK signaling pathway that results in down-regulating expression of pro-inflammatory cytokines. Furthermore, it inhibits T cell proliferation induced by DCs. It also inhibits in vitro keratinocyte inflammation induced by Borrelia burgdorferi or by the major outer surface protein (OspC) of Borrelia. In addition, it downregulates chemokines and monocyte chemoattractant protein 1, as well as several antimicrobial peptides such as defensins, cathelicidin, psoriasin, and RNase 7. Apart from its immunomodulatory activities, it is also associated with protection of Borrelia spirochetes from antibody-mediated killing through its binding to OspC. In vivo, tests on different immune disease animal models show promising therapeutic results, e.g., in inhibiting HIV infection, experimental autoimmune encephalomyelitis, transplantation rejection, and asthma. This chain is Salivary protein 15 Iper-3, found in Ixodes persulcatus (Taiga tick).